A 158-amino-acid chain; its full sequence is 6,7-dimethyl-8-ribityllumazine synthase (158 aa).

Residues F24, 58–60 (AFE), and 82–84 (AVI) contribute to the 5-amino-6-(D-ribitylamino)uracil site. A (2S)-2-hydroxy-3-oxobutyl phosphate-binding site is contributed by 87 to 88 (GT). The active-site Proton donor is H90. F115 is a binding site for 5-amino-6-(D-ribitylamino)uracil. Residue R129 participates in (2S)-2-hydroxy-3-oxobutyl phosphate binding.

This sequence belongs to the DMRL synthase family. As to quaternary structure, forms an icosahedral capsid composed of 60 subunits, arranged as a dodecamer of pentamers.

The catalysed reaction is (2S)-2-hydroxy-3-oxobutyl phosphate + 5-amino-6-(D-ribitylamino)uracil = 6,7-dimethyl-8-(1-D-ribityl)lumazine + phosphate + 2 H2O + H(+). Its pathway is cofactor biosynthesis; riboflavin biosynthesis; riboflavin from 2-hydroxy-3-oxobutyl phosphate and 5-amino-6-(D-ribitylamino)uracil: step 1/2. In terms of biological role, catalyzes the formation of 6,7-dimethyl-8-ribityllumazine by condensation of 5-amino-6-(D-ribitylamino)uracil with 3,4-dihydroxy-2-butanone 4-phosphate. This is the penultimate step in the biosynthesis of riboflavin. This is 6,7-dimethyl-8-ribityllumazine synthase from Ectopseudomonas mendocina (strain ymp) (Pseudomonas mendocina).